Here is a 317-residue protein sequence, read N- to C-terminus: MATTRMVRVSQDGSGDYCSVQDAIDSVPLGNTCRTVIRLSPGIYRQPVYVPKRKNFITFAGISPEITVLTWNNTASKIEHHQASRVIGTGTFGCGSVIVEGEDFIAENITFENSAPEGSGQAVAIRVTADRCAFYNCRFLGWQDTLYLHHGKQYLKDCYIEGSVDFIFGNSTALLEHCHIHCKSQGFITAQSRKSSQESTGYVFLRCVITGNGQSGYMYLGRPWGPFGRVVLAYTYMDACIRNVGWHNWGNAENERSACFYEYRCFGPGSCSSERVPWSRELMDDEAGHFVHHSFVDPEQDRPWLCLRMGVKTPYSA.

Threonine 91 and glutamine 121 together coordinate substrate. Residue aspartate 144 is the Proton donor of the active site. Aspartate 165 functions as the Nucleophile in the catalytic mechanism. Arginine 222 and tryptophan 224 together coordinate substrate.

Belongs to the pectinesterase family. As to expression, expressed in siliques.

It catalyses the reaction [(1-&gt;4)-alpha-D-galacturonosyl methyl ester](n) + n H2O = [(1-&gt;4)-alpha-D-galacturonosyl](n) + n methanol + n H(+). It participates in glycan metabolism; pectin degradation; 2-dehydro-3-deoxy-D-gluconate from pectin: step 1/5. With respect to regulation, does not require salt for activity. Not inhibited by kiwi pectin methylesterase inhibitor (PMEI). Its function is as follows. Acts in the modification of cell walls via demethylesterification of cell wall pectin. Acts in a blockwise manner, resulting in a cell wall rigidification. This chain is Pectinesterase 31 (PME31), found in Arabidopsis thaliana (Mouse-ear cress).